The following is a 436-amino-acid chain: UPF0229 protein Meso_0256 (436 aa).

A disordered region spans residues 53 to 110; sequence PMPARGTSEPTFRPDRSSGERGYILPGNKEFAPGDRLPKPGASGGEGGTGAGRGGSDD. A compositionally biased stretch (gly residues) spans 94-106; the sequence is ASGGEGGTGAGRG.

Belongs to the UPF0229 family.

The polypeptide is UPF0229 protein Meso_0256 (Chelativorans sp. (strain BNC1)).